Here is a 562-residue protein sequence, read N- to C-terminus: MQFDYIIIGAGSAGNVLATRLTEDPNTSVLLLEAGGPDYRFDFRTQMPAALAFPLQGKRYNWAYETEPEPFMNNRRMECGRGKGLGGSSLINGMCYIRGNAMDLDNWAKEPGLENWSYLDCLPYYRKAETRDVGENDYHGGDGPVSVTTSKPGVNPLFEAMIEAGVQAGYPRTDDLNGYQQEGFGPMDRTVTPQGRRASTARGYLDQAKSRPNLTIRTHAMTDHIIFDCKRAVGVEWLEGDSTIPTRATANKEVLLCAGAIASPQILQRSGVGNAELLAEFDIPLVHDLPGVGENLQDHLEMYLQYECKEPVSLYPALQWWNQPKIGAEWLFGGTGVGASNHFEAGGFIRSREEFAWPNIQYHFLPVAINYNGSNAVKEHGFQCHVGSMRSPSRGHVRIKSRDPHQHPAILFNYMSHEQDWQEFRDAIRITREIMHQPALDQYRGREISPGTECQTDEQLDEFVRNHAETAFHPCGTCKMGYDEMSVVDGEGRVHGLEGLRVVDASIMPQIITGNLNATTIMIGEKMADMIRGKEALPRSTAGYFVANGMPVRAKKMSRDLN.

Residue 4–33 (DYIIIGAGSAGNVLATRLTEDPNTSVLLLE) participates in FAD binding. Catalysis depends on H473, which acts as the Proton acceptor.

This sequence belongs to the GMC oxidoreductase family. The cofactor is FAD.

It localises to the cell membrane. The enzyme catalyses choline + A = betaine aldehyde + AH2. It carries out the reaction betaine aldehyde + NAD(+) + H2O = glycine betaine + NADH + 2 H(+). The protein operates within amine and polyamine biosynthesis; betaine biosynthesis via choline pathway; betaine aldehyde from choline (cytochrome c reductase route): step 1/1. In terms of biological role, involved in the biosynthesis of the osmoprotectant glycine betaine. Catalyzes the oxidation of choline to betaine aldehyde and betaine aldehyde to glycine betaine at the same rate. This chain is Oxygen-dependent choline dehydrogenase, found in Escherichia coli O157:H7.